The sequence spans 246 residues: uncharacterized protein (246 aa).

Disordered regions lie at residues 9 to 125 (CSRV…GAMA) and 155 to 203 (QPVR…EEKA). A compositionally biased stretch (basic residues) spans 27 to 37 (GTRRQRQRPRQ). Pro residues-rich tracts occupy residues 54-64 (PRPPTGPPARY) and 101-117 (EPRPPPESPGAPPPPGS). A compositionally biased stretch (basic residues) spans 161 to 176 (KLPKGKGRLRRPRQSR). Phosphothreonine is present on Thr179. Residues Ser196, Ser210, and Ser220 each carry the phosphoserine modification.

Its subcellular location is the cytoplasm. This is an uncharacterized protein from Mus musculus (Mouse).